We begin with the raw amino-acid sequence, 304 residues long: Ribonuclease BN (304 aa).

Residues His63, His65, Asp67, His68, His140, Asp211, and His269 each contribute to the Zn(2+) site. The active-site Proton acceptor is the Asp67.

The protein belongs to the RNase Z family. RNase BN subfamily. In terms of assembly, homodimer. Zn(2+) is required as a cofactor.

Zinc phosphodiesterase, which has both exoribonuclease and endoribonuclease activities. The sequence is that of Ribonuclease BN from Erwinia tasmaniensis (strain DSM 17950 / CFBP 7177 / CIP 109463 / NCPPB 4357 / Et1/99).